We begin with the raw amino-acid sequence, 299 residues long: Mitochondrial magnesium exporter 1 (299 aa).

Solcar repeat units lie at residues 12–103 (SNPV…GKRL), 112–200 (LTYP…LQEL), and 210–296 (ISTT…TNDL). The next 4 membrane-spanning stretches (helical) occupy residues 79–99 (ISAP…VYAA), 114–134 (YPQI…VTVP), 216–236 (ILSG…FDVL), and 272–292 (ILPI…GVEL).

The protein belongs to the mitochondrial carrier (TC 2.A.29) family.

The protein localises to the mitochondrion membrane. Mediates efflux of magnesium ions from mitochondria, suggesting a role in magnesium homeostasis. The protein is Mitochondrial magnesium exporter 1 of Drosophila melanogaster (Fruit fly).